Consider the following 504-residue polypeptide: Glycerol kinase (504 aa).

ADP is bound at residue Thr12. Thr12, Thr13, and Ser14 together coordinate ATP. Residue Thr12 participates in sn-glycerol 3-phosphate binding. Position 16 (Arg16) interacts with ADP. 4 residues coordinate sn-glycerol 3-phosphate: Arg82, Glu83, Tyr134, and Asp246. Residues Arg82, Glu83, Tyr134, Asp246, and Gln247 each contribute to the glycerol site. Residues Thr268 and Gly312 each contribute to the ADP site. ATP contacts are provided by Thr268, Gly312, Gln316, and Gly413. Residues Gly413 and Asn417 each contribute to the ADP site.

It belongs to the FGGY kinase family.

It carries out the reaction glycerol + ATP = sn-glycerol 3-phosphate + ADP + H(+). It functions in the pathway polyol metabolism; glycerol degradation via glycerol kinase pathway; sn-glycerol 3-phosphate from glycerol: step 1/1. Inhibited by fructose 1,6-bisphosphate (FBP). Functionally, key enzyme in the regulation of glycerol uptake and metabolism. Catalyzes the phosphorylation of glycerol to yield sn-glycerol 3-phosphate. This chain is Glycerol kinase, found in Pseudarthrobacter chlorophenolicus (strain ATCC 700700 / DSM 12829 / CIP 107037 / JCM 12360 / KCTC 9906 / NCIMB 13794 / A6) (Arthrobacter chlorophenolicus).